The chain runs to 344 residues: Lipase chaperone (344 aa).

The chain crosses the membrane as a helical span at residues 13–35 (RIAPYGAAGLAAIVGVAIWSGTG).

The protein belongs to the lipase chaperone family.

It is found in the cell inner membrane. Functionally, may be involved in the folding of the extracellular lipase during its passage through the periplasm. In Burkholderia vietnamiensis (strain G4 / LMG 22486) (Burkholderia cepacia (strain R1808)), this protein is Lipase chaperone.